The following is a 424-amino-acid chain: ATP-citrate synthase alpha chain protein 3 (424 aa).

3 residues coordinate citrate: Asn343, Thr345, and Arg376.

The protein belongs to the succinate/malate CoA ligase beta subunit family. Heterooctamer of 4 alpha and 4 beta chains.

The protein resides in the cytoplasm. The protein localises to the cytosol. The catalysed reaction is oxaloacetate + acetyl-CoA + ADP + phosphate = citrate + ATP + CoA. Functionally, ATP citrate-lyase is the primary enzyme responsible for the synthesis of cytosolic acetyl-CoA, used for the elongation of fatty acids and biosynthesis of isoprenoids, flavonoids and malonated derivatives. May supply substrate to the cytosolic acetyl-CoA carboxylase, which generates the malonyl-CoA used for the synthesis of a multitude of compounds, including very long chain fatty acids and flavonoids. Required for normal growth and development and elongation of C18 fatty acids to C20 to C24 fatty acids in seeds. In contrast to all known animal ACL enzymes having a homomeric structure, plant ACLs are composed of alpha and beta chains. This Arabidopsis thaliana (Mouse-ear cress) protein is ATP-citrate synthase alpha chain protein 3 (ACLA-3).